Reading from the N-terminus, the 78-residue chain is Putative membrane protein insertion efficiency factor (78 aa).

The protein belongs to the UPF0161 family.

It localises to the cell inner membrane. Its function is as follows. Could be involved in insertion of integral membrane proteins into the membrane. The sequence is that of Putative membrane protein insertion efficiency factor from Thiobacillus denitrificans (strain ATCC 25259 / T1).